The chain runs to 354 residues: Major egg antigen (354 aa).

Positions 1–21 (MSGGKQHNAVSIPVNREQRSF) are disordered. SHSP domains lie at 122 to 233 (SVND…VAVR) and 251 to 354 (AKGV…AITH).

It belongs to the small heat shock protein (HSP20) family.

The protein is Major egg antigen of Schistosoma mansoni (Blood fluke).